A 416-amino-acid polypeptide reads, in one-letter code: Serine/threonine transporter SstT (416 aa).

9 consecutive transmembrane segments (helical) span residues 15 to 35 (SLVSQILVGLVFGILLAMFMP), 49 to 69 (VGALKAVAPLLVFVLVMAAII), 82 to 102 (ILLLYLLGTFLAAAVAVVASF), 141 to 161 (ALLDANYIGILAWAIGLGIAM), 192 to 212 (LGILGLVASTLAETGFDALFG), 217 to 237 (LVVLIGCMLFIAFVVNPLIVF), 288 to 308 (VSIPLGATINMAGAAITITVL), 316 to 336 (LGMEVDLATAILLSVVATISA), and 363 to 383 (IAMQVVAVGFIIGVLQDSAET).

It belongs to the dicarboxylate/amino acid:cation symporter (DAACS) (TC 2.A.23) family.

The protein localises to the cell inner membrane. The enzyme catalyses L-serine(in) + Na(+)(in) = L-serine(out) + Na(+)(out). It carries out the reaction L-threonine(in) + Na(+)(in) = L-threonine(out) + Na(+)(out). In terms of biological role, involved in the import of serine and threonine into the cell, with the concomitant import of sodium (symport system). The sequence is that of Serine/threonine transporter SstT from Aeromonas hydrophila subsp. hydrophila (strain ATCC 7966 / DSM 30187 / BCRC 13018 / CCUG 14551 / JCM 1027 / KCTC 2358 / NCIMB 9240 / NCTC 8049).